A 253-amino-acid chain; its full sequence is 3-isopropylmalate dehydratase small subunit 3 (253 aa).

Residues 1-56 (MATSQQFLNPTLFKSLASSNKNSCTLCPSPFLQLKSASTIFNYKPLTSSSATIITR) constitute a chloroplast transit peptide.

The protein belongs to the LeuD family. As to quaternary structure, heterodimer of the large LEUC/IIL1 subunit and the small LEUD (SSU1, SSU2 or SSU3) subunits. Expressed in vascular bundles of roots, cotyledons and rosette leaves. Expressed in stem vascular bundles which branche off into lateral inflorescences. Expressed in connective tissues in anthers. In hypocotyls, expressed in parenchyma cells surrounding the vasculature. In rosette leaves, expressed in phloem cells and cells close to the xylem along the vascular bundles. In roots of adult plants, expressed in cells closely associated with the stele. In flowering stalks, expressed in parenchyma cells associated with the phloem or the xylem.

Its subcellular location is the plastid. It is found in the chloroplast stroma. The catalysed reaction is (2R,3S)-3-isopropylmalate = (2S)-2-isopropylmalate. The enzyme catalyses a 2-(omega-methylsulfanyl)alkylmalate = a 2-(omega-methylsulfanyl)alkylmaleate + H2O. It carries out the reaction 2-(3-methylsulfanyl)propylmalate = 2-(2-methylsulfanyl)propylmaleate + H2O. It catalyses the reaction a 3-(omega-methylsulfanyl)alkylmalate = a 2-(omega-methylsulfanyl)alkylmaleate + H2O. The catalysed reaction is 2-(2-methylsulfanyl)ethylmalate = 2-(2-methylsulfanyl)ethylmaleate + H2O. The enzyme catalyses 3-(2-methylsulfanyl)ethylmalate = 2-(2-methylsulfanyl)ethylmaleate + H2O. It carries out the reaction 3-(3-methylsulfanyl)propylmalate = 2-(2-methylsulfanyl)propylmaleate + H2O. The protein operates within amino-acid biosynthesis; L-leucine biosynthesis; L-leucine from 3-methyl-2-oxobutanoate: step 2/4. Catalyzes the isomerization between 2-isopropylmalate and 3-isopropylmalate, via the formation of 2-isopropylmaleate. Functions redundantly with LEUD1 in the methionine chain elongation pathway of aliphatic glucosinolate formation. The polypeptide is 3-isopropylmalate dehydratase small subunit 3 (Arabidopsis thaliana (Mouse-ear cress)).